The following is a 315-amino-acid chain: Methionyl-tRNA formyltransferase (315 aa).

Position 113–116 (113–116 (SLLP)) interacts with (6S)-5,6,7,8-tetrahydrofolate.

It belongs to the Fmt family.

It carries out the reaction L-methionyl-tRNA(fMet) + (6R)-10-formyltetrahydrofolate = N-formyl-L-methionyl-tRNA(fMet) + (6S)-5,6,7,8-tetrahydrofolate + H(+). Functionally, attaches a formyl group to the free amino group of methionyl-tRNA(fMet). The formyl group appears to play a dual role in the initiator identity of N-formylmethionyl-tRNA by promoting its recognition by IF2 and preventing the misappropriation of this tRNA by the elongation apparatus. In Salmonella gallinarum (strain 287/91 / NCTC 13346), this protein is Methionyl-tRNA formyltransferase.